Reading from the N-terminus, the 270-residue chain is S-adenosylmethionine decarboxylase proenzyme (270 aa).

Catalysis depends on Ser-117, which acts as the Schiff-base intermediate with substrate; via pyruvic acid. Ser-117 is modified (pyruvic acid (Ser); by autocatalysis). The active-site Proton acceptor; for processing activity is the His-122. The Proton donor; for catalytic activity role is filled by Cys-145.

It belongs to the prokaryotic AdoMetDC family. Type 2 subfamily. As to quaternary structure, heterooctamer of four alpha and four beta chains arranged as a tetramer of alpha/beta heterodimers. It depends on pyruvate as a cofactor. Post-translationally, is synthesized initially as an inactive proenzyme. Formation of the active enzyme involves a self-maturation process in which the active site pyruvoyl group is generated from an internal serine residue via an autocatalytic post-translational modification. Two non-identical subunits are generated from the proenzyme in this reaction, and the pyruvate is formed at the N-terminus of the alpha chain, which is derived from the carboxyl end of the proenzyme. The post-translation cleavage follows an unusual pathway, termed non-hydrolytic serinolysis, in which the side chain hydroxyl group of the serine supplies its oxygen atom to form the C-terminus of the beta chain, while the remainder of the serine residue undergoes an oxidative deamination to produce ammonia and the pyruvoyl group blocking the N-terminus of the alpha chain.

The enzyme catalyses S-adenosyl-L-methionine + H(+) = S-adenosyl 3-(methylsulfanyl)propylamine + CO2. The protein operates within amine and polyamine biosynthesis; S-adenosylmethioninamine biosynthesis; S-adenosylmethioninamine from S-adenosyl-L-methionine: step 1/1. Its function is as follows. Catalyzes the decarboxylation of S-adenosylmethionine to S-adenosylmethioninamine (dcAdoMet), the propylamine donor required for the synthesis of the polyamines spermine and spermidine from the diamine putrescine. The sequence is that of S-adenosylmethionine decarboxylase proenzyme from Pseudoalteromonas translucida (strain TAC 125).